The following is a 617-amino-acid chain: tRNA 5-methylaminomethyl-2-thiouridine biosynthesis bifunctional protein MnmC (617 aa).

The interval 1-226 (MLDWQNGQLY…KREMLQGDLP (226 aa)) is tRNA (mnm(5)s(2)U34)-methyltransferase. An FAD-dependent cmnm(5)s(2)U34 oxidoreductase region spans residues 241–617 (IGGGIAGCAA…SPAIPVSIKG (377 aa)).

In the N-terminal section; belongs to the methyltransferase superfamily. tRNA (mnm(5)s(2)U34)-methyltransferase family. The protein in the C-terminal section; belongs to the DAO family. It depends on FAD as a cofactor.

The protein resides in the cytoplasm. It catalyses the reaction 5-aminomethyl-2-thiouridine(34) in tRNA + S-adenosyl-L-methionine = 5-methylaminomethyl-2-thiouridine(34) in tRNA + S-adenosyl-L-homocysteine + H(+). Functionally, catalyzes the last two steps in the biosynthesis of 5-methylaminomethyl-2-thiouridine (mnm(5)s(2)U) at the wobble position (U34) in tRNA. Catalyzes the FAD-dependent demodification of cmnm(5)s(2)U34 to nm(5)s(2)U34, followed by the transfer of a methyl group from S-adenosyl-L-methionine to nm(5)s(2)U34, to form mnm(5)s(2)U34. This is tRNA 5-methylaminomethyl-2-thiouridine biosynthesis bifunctional protein MnmC from Nitrosospira multiformis (strain ATCC 25196 / NCIMB 11849 / C 71).